The following is a 703-amino-acid chain: Polyribonucleotide nucleotidyltransferase (703 aa).

Mg(2+)-binding residues include Asp-486 and Asp-492. Residues 553–612 (PKIEIIHINPDKIRDVIGPGGKKINEIIDATGVKLDIEQDGTVFIGSSDASMIEAAKKLI) form the KH domain. Positions 622–690 (GQIYMATVKR…KQGRVNASRK (69 aa)) constitute an S1 motif domain.

The protein belongs to the polyribonucleotide nucleotidyltransferase family. The cofactor is Mg(2+).

It is found in the cytoplasm. It catalyses the reaction RNA(n+1) + phosphate = RNA(n) + a ribonucleoside 5'-diphosphate. In terms of biological role, involved in mRNA degradation. Catalyzes the phosphorolysis of single-stranded polyribonucleotides processively in the 3'- to 5'-direction. The polypeptide is Polyribonucleotide nucleotidyltransferase (Macrococcus caseolyticus (strain JCSC5402) (Macrococcoides caseolyticum)).